Consider the following 709-residue polypeptide: Phosphoribosylformylglycinamidine synthase subunit PurL (709 aa).

The active site involves histidine 36. ATP contacts are provided by tyrosine 39 and lysine 80. Glutamate 82 contributes to the Mg(2+) binding site. Substrate-binding positions include serine 83–histidine 86 and arginine 105. Histidine 84 functions as the Proton acceptor in the catalytic mechanism. A Mg(2+)-binding site is contributed by aspartate 106. Glutamine 226 provides a ligand contact to substrate. Aspartate 252 serves as a coordination point for Mg(2+). Glutamate 294 to glutamine 296 lines the substrate pocket. ATP is bound by residues aspartate 470 and glycine 507. Residue serine 510 coordinates substrate.

It belongs to the FGAMS family. As to quaternary structure, monomer. Part of the FGAM synthase complex composed of 1 PurL, 1 PurQ and 2 PurS subunits.

The protein resides in the cytoplasm. It catalyses the reaction N(2)-formyl-N(1)-(5-phospho-beta-D-ribosyl)glycinamide + L-glutamine + ATP + H2O = 2-formamido-N(1)-(5-O-phospho-beta-D-ribosyl)acetamidine + L-glutamate + ADP + phosphate + H(+). It functions in the pathway purine metabolism; IMP biosynthesis via de novo pathway; 5-amino-1-(5-phospho-D-ribosyl)imidazole from N(2)-formyl-N(1)-(5-phospho-D-ribosyl)glycinamide: step 1/2. Part of the phosphoribosylformylglycinamidine synthase complex involved in the purines biosynthetic pathway. Catalyzes the ATP-dependent conversion of formylglycinamide ribonucleotide (FGAR) and glutamine to yield formylglycinamidine ribonucleotide (FGAM) and glutamate. The FGAM synthase complex is composed of three subunits. PurQ produces an ammonia molecule by converting glutamine to glutamate. PurL transfers the ammonia molecule to FGAR to form FGAM in an ATP-dependent manner. PurS interacts with PurQ and PurL and is thought to assist in the transfer of the ammonia molecule from PurQ to PurL. In Saccharolobus solfataricus (strain ATCC 35092 / DSM 1617 / JCM 11322 / P2) (Sulfolobus solfataricus), this protein is Phosphoribosylformylglycinamidine synthase subunit PurL.